Reading from the N-terminus, the 152-residue chain is Deoxyuridine 5'-triphosphate nucleotidohydrolase (152 aa).

Residues 71–73 (RSG), Asn84, 88–90 (LID), and Met98 contribute to the substrate site.

Belongs to the dUTPase family. Requires Mg(2+) as cofactor.

It carries out the reaction dUTP + H2O = dUMP + diphosphate + H(+). It functions in the pathway pyrimidine metabolism; dUMP biosynthesis; dUMP from dCTP (dUTP route): step 2/2. In terms of biological role, this enzyme is involved in nucleotide metabolism: it produces dUMP, the immediate precursor of thymidine nucleotides and it decreases the intracellular concentration of dUTP so that uracil cannot be incorporated into DNA. The sequence is that of Deoxyuridine 5'-triphosphate nucleotidohydrolase from Shewanella loihica (strain ATCC BAA-1088 / PV-4).